The chain runs to 384 residues: GDSL esterase/lipase ENOD8 (384 aa).

Positions Met-1 to Ala-31 are cleaved as a signal peptide. The active-site Nucleophile is the Ser-46. N-linked (GlcNAc...) asparagine glycans are attached at residues Asn-105, Asn-191, Asn-198, Asn-276, and Asn-330. Catalysis depends on residues Asp-349 and His-352.

Belongs to the 'GDSL' lipolytic enzyme family. As to expression, expressed in root nodules (at protein level).

The protein localises to the symbiosome. Has lipase and esterase activities. Probably involved in root nodule physiology. This is GDSL esterase/lipase ENOD8 from Medicago truncatula (Barrel medic).